Consider the following 184-residue polypeptide: Endoribonuclease YbeY (184 aa).

Residues His-146, His-150, and His-156 each contribute to the Zn(2+) site.

It belongs to the endoribonuclease YbeY family. Requires Zn(2+) as cofactor.

The protein resides in the cytoplasm. In terms of biological role, single strand-specific metallo-endoribonuclease involved in late-stage 70S ribosome quality control and in maturation of the 3' terminus of the 16S rRNA. The polypeptide is Endoribonuclease YbeY (Nostoc sp. (strain PCC 7120 / SAG 25.82 / UTEX 2576)).